We begin with the raw amino-acid sequence, 301 residues long: NADH-ubiquinone oxidoreductase chain 1 (301 aa).

Helical transmembrane passes span 4–24 (IIPILLAVAFLTLLERKVLGY), 62–82 (LALFIIAPTLALTLALMMWIP), 96–116 (ILFMLALSSLAVYAILWSGWA), 140–160 (LAIIILSILLMNGSFTLSTLI), 165–185 (YTWLIMPSWPLAMMWFISTIA), 216–236 (LFFLAEYANIIMMNALTIILF), 247–267 (EMYTANFMLKALLFTTFFLWI), and 279–299 (LMHLLWKNFLPLTLVMCMWHV).

This sequence belongs to the complex I subunit 1 family.

It localises to the mitochondrion inner membrane. The catalysed reaction is a ubiquinone + NADH + 5 H(+)(in) = a ubiquinol + NAD(+) + 4 H(+)(out). Core subunit of the mitochondrial membrane respiratory chain NADH dehydrogenase (Complex I) that is believed to belong to the minimal assembly required for catalysis. Complex I functions in the transfer of electrons from NADH to the respiratory chain. The immediate electron acceptor for the enzyme is believed to be ubiquinone. The protein is NADH-ubiquinone oxidoreductase chain 1 (MT-ND1) of Nyctalus noctula (Noctule bat).